A 362-amino-acid polypeptide reads, in one-letter code: Adenosine deaminase (362 aa).

Residues H19 and H21 each coordinate Zn(2+). Substrate-binding residues include H21, D23, and G181. H208 lines the Zn(2+) pocket. E211 functions as the Proton donor in the catalytic mechanism. A Zn(2+)-binding site is contributed by D300.

It belongs to the metallo-dependent hydrolases superfamily. Adenosine and AMP deaminases family. Adenosine deaminase subfamily. The cofactor is Zn(2+).

It carries out the reaction adenosine + H2O + H(+) = inosine + NH4(+). It catalyses the reaction 2'-deoxyadenosine + H2O + H(+) = 2'-deoxyinosine + NH4(+). Functionally, catalyzes the hydrolytic deamination of adenosine and 2-deoxyadenosine. The protein is Adenosine deaminase of Mycobacterium marinum (strain ATCC BAA-535 / M).